A 117-amino-acid polypeptide reads, in one-letter code: ATP-dependent Clp protease adapter protein ClpS 1 (117 aa).

The tract at residues 1–33 (MIAMPVRMQQGSEGDGGGPSRGTSVITRTKPKT) is disordered.

Belongs to the ClpS family. In terms of assembly, binds to the N-terminal domain of the chaperone ClpA.

Its function is as follows. Involved in the modulation of the specificity of the ClpAP-mediated ATP-dependent protein degradation. This Rhizobium meliloti (strain 1021) (Ensifer meliloti) protein is ATP-dependent Clp protease adapter protein ClpS 1.